The primary structure comprises 62 residues: Large ribosomal subunit protein uL30 (62 aa).

The protein belongs to the universal ribosomal protein uL30 family. As to quaternary structure, part of the 50S ribosomal subunit.

The chain is Large ribosomal subunit protein uL30 from Hydrogenovibrio crunogenus (strain DSM 25203 / XCL-2) (Thiomicrospira crunogena).